We begin with the raw amino-acid sequence, 417 residues long: Mitochondrial tRNA-specific 2-thiouridylase 1 (417 aa).

ATP contacts are provided by residues 32–39 (AMSSGVDS) and Met-58. The interval 122–124 (NPD) is interaction with target base in tRNA. Cys-127 functions as the Nucleophile in the catalytic mechanism. A disulfide bridge connects residues Cys-127 and Cys-229. Residue Gly-154 participates in ATP binding. The tract at residues 179–181 (KDQ) is interaction with tRNA. Cys-229 (cysteine persulfide intermediate) is an active-site residue. An interaction with tRNA region spans residues 354–355 (RS).

This sequence belongs to the MnmA/TRMU family.

The protein localises to the mitochondrion. It carries out the reaction 5-taurinomethyluridine(34) in tRNA + S-sulfanyl-L-cysteinyl-[protein] + AH2 + ATP = 5-taurinomethyl-2-thiouridine(34) in tRNA + L-cysteinyl-[protein] + A + AMP + diphosphate + H(+). Catalyzes the 2-thiolation of uridine at the wobble position (U34) of mitochondrial tRNA(Lys), tRNA(Glu) and tRNA(Gln). Required for the formation of 5-taurinomethyl-2-thiouridine (tm5s2U) of mitochondrial tRNA(Lys), tRNA(Glu), and tRNA(Gln) at the wobble position. ATP is required to activate the C2 atom of the wobble base. The sequence is that of Mitochondrial tRNA-specific 2-thiouridylase 1 (SLM3) from Saccharomyces cerevisiae (strain ATCC 204508 / S288c) (Baker's yeast).